A 683-amino-acid polypeptide reads, in one-letter code: Long-chain-fatty-acid--CoA ligase 5 (683 aa).

Residues 12-32 traverse the membrane as a helical; Signal-anchor for type III membrane protein segment; that stretch reads LPTPALICLLTFGTAIFLWLI. The Cytoplasmic segment spans residues 33–683; that stretch reads NRPQPVLPLI…IKSLYESIEE (651 aa). An N6-acetyllysine modification is found at Lys361.

This sequence belongs to the ATP-dependent AMP-binding enzyme family. As to expression, expressed most abundantly in the small intestine, and to a much lesser extent in the lung, liver, adrenal gland, adipose tissue and kidney.

The protein resides in the mitochondrion. The protein localises to the endoplasmic reticulum. It localises to the mitochondrion outer membrane. It is found in the endoplasmic reticulum membrane. Its subcellular location is the cell membrane. It catalyses the reaction a long-chain fatty acid + ATP + CoA = a long-chain fatty acyl-CoA + AMP + diphosphate. The catalysed reaction is (5Z,8Z,11Z,14Z)-eicosatetraenoate + ATP + CoA = (5Z,8Z,11Z,14Z)-eicosatetraenoyl-CoA + AMP + diphosphate. It carries out the reaction 15-hydroxy-(5Z,8Z,11Z,13E)-eicosatetraenoate + ATP + CoA = 15-hydroxy-(5Z,8Z,11Z,13E)-eicosatetraenoyl-CoA + AMP + diphosphate. The enzyme catalyses 12-hydroxy-(5Z,8Z,10E,14Z)-eicosatetraenoate + ATP + CoA = 12-hydroxy-(5Z,8Z,10E,14Z)-eicosatetraenoyl-CoA + AMP + diphosphate. It catalyses the reaction 5-hydroxy-(6E,8Z,11Z,14Z)-eicosatetraenoate + ATP + CoA = 5-hydroxy-(6E,8Z,11Z,14Z)-eicosatetraenoyl-CoA + AMP + diphosphate. The catalysed reaction is 14,15-epoxy-(5Z,8Z,11Z)-eicosatrienoate + ATP + CoA = 14,15-epoxy-(5Z,8Z,11Z)-eicosatrienoyl-CoA + AMP + diphosphate. It carries out the reaction 11,12-epoxy-(5Z,8Z,14Z)-eicosatrienoate + ATP + CoA = 11,12-epoxy-(5Z,8Z,14Z)-eicosatrienoyl-CoA + AMP + diphosphate. The enzyme catalyses hexadecanoate + ATP + CoA = hexadecanoyl-CoA + AMP + diphosphate. It catalyses the reaction (E)-hexadec-2-enoate + ATP + CoA = (2E)-hexadecenoyl-CoA + AMP + diphosphate. The catalysed reaction is (9Z)-octadecenoate + ATP + CoA = (9Z)-octadecenoyl-CoA + AMP + diphosphate. Catalyzes the conversion of long-chain fatty acids to their active form acyl-CoAs for both synthesis of cellular lipids, and degradation via beta-oxidation. ACSL5 may sensitize epithelial cells to apoptosis specifically triggered by the death ligand TRAIL at the villus tip of the crypt-villus axis of the small intestine. May have a role in the survival of glioma cells. May activate fatty acids from exogenous sources for the synthesis of triacylglycerol destined for intracellular storage. It was suggested that it may also stimulate fatty acid oxidation. Utilizes a wide range of saturated fatty acids with a preference for C16-C18 unsaturated fatty acids. This Rattus norvegicus (Rat) protein is Long-chain-fatty-acid--CoA ligase 5.